Here is a 216-residue protein sequence, read N- to C-terminus: Imidazole glycerol phosphate synthase subunit HisH (216 aa).

Residues R2–P216 form the Glutamine amidotransferase type-1 domain. C88 serves as the catalytic Nucleophile. Active-site residues include H196 and E198.

Heterodimer of HisH and HisF.

The protein resides in the cytoplasm. It catalyses the reaction 5-[(5-phospho-1-deoxy-D-ribulos-1-ylimino)methylamino]-1-(5-phospho-beta-D-ribosyl)imidazole-4-carboxamide + L-glutamine = D-erythro-1-(imidazol-4-yl)glycerol 3-phosphate + 5-amino-1-(5-phospho-beta-D-ribosyl)imidazole-4-carboxamide + L-glutamate + H(+). It carries out the reaction L-glutamine + H2O = L-glutamate + NH4(+). The protein operates within amino-acid biosynthesis; L-histidine biosynthesis; L-histidine from 5-phospho-alpha-D-ribose 1-diphosphate: step 5/9. Its function is as follows. IGPS catalyzes the conversion of PRFAR and glutamine to IGP, AICAR and glutamate. The HisH subunit catalyzes the hydrolysis of glutamine to glutamate and ammonia as part of the synthesis of IGP and AICAR. The resulting ammonia molecule is channeled to the active site of HisF. The chain is Imidazole glycerol phosphate synthase subunit HisH from Rhizobium meliloti (strain 1021) (Ensifer meliloti).